A 295-amino-acid polypeptide reads, in one-letter code: Putative nudix hydrolase 7 (295 aa).

In terms of domain architecture, Nudix hydrolase spans 9 to 182; it reads SWRSAASIIL…KYALPPPQVY (174 aa). Residues 52-73 carry the Nudix box motif; sequence TDAKLGDEFRIAAVRELFEESG. Mg(2+) is bound by residues glutamate 67 and glutamate 71.

It belongs to the Nudix hydrolase family. Mg(2+) is required as a cofactor. The cofactor is Mn(2+).

In terms of biological role, probably mediates the hydrolysis of some nucleoside diphosphate derivatives. In Caenorhabditis elegans, this protein is Putative nudix hydrolase 7 (ndx-7).